We begin with the raw amino-acid sequence, 1123 residues long: uncharacterized protein (1123 aa).

This is an uncharacterized protein from Ictaluridae (bullhead catfishes).